The primary structure comprises 163 residues: Protein-export protein SecB (163 aa).

This sequence belongs to the SecB family. In terms of assembly, homotetramer, a dimer of dimers. One homotetramer interacts with 1 SecA dimer.

Its subcellular location is the cytoplasm. Its function is as follows. One of the proteins required for the normal export of preproteins out of the cell cytoplasm. It is a molecular chaperone that binds to a subset of precursor proteins, maintaining them in a translocation-competent state. It also specifically binds to its receptor SecA. The protein is Protein-export protein SecB of Shewanella woodyi (strain ATCC 51908 / MS32).